A 726-amino-acid polypeptide reads, in one-letter code: Dipeptidyl-peptidase 5 (726 aa).

The N-terminal stretch at 1–19 (MAAAKWLIASLAFASSGLA) is a signal peptide. Residues Asn96 and Asn252 are each glycosylated (N-linked (GlcNAc...) asparagine). The disordered stretch occupies residues 269–291 (AEPINKRNGPRTPQGIEGASSSP). Ser558 (charge relay system) is an active-site residue. N-linked (GlcNAc...) asparagine glycosylation is present at Asn605. Residues Asp641 and His673 each act as charge relay system in the active site. The N-linked (GlcNAc...) asparagine glycan is linked to Asn699.

This sequence belongs to the peptidase S9C family.

It localises to the secreted. In terms of biological role, extracellular dipeptidyl-peptidase which removes N-terminal dipeptides sequentially from polypeptides having unsubstituted N-termini. Contributes to pathogenicity. The polypeptide is Dipeptidyl-peptidase 5 (DPP5) (Trichophyton tonsurans (Scalp ringworm fungus)).